The chain runs to 207 residues: LexA repressor (207 aa).

Positions 28-48 (VREIGEAVGLASSSTVHGHLA) form a DNA-binding region, H-T-H motif. Active-site for autocatalytic cleavage activity residues include serine 129 and lysine 167.

It belongs to the peptidase S24 family. In terms of assembly, homodimer.

The enzyme catalyses Hydrolysis of Ala-|-Gly bond in repressor LexA.. Its function is as follows. Represses a number of genes involved in the response to DNA damage (SOS response), including recA and lexA. In the presence of single-stranded DNA, RecA interacts with LexA causing an autocatalytic cleavage which disrupts the DNA-binding part of LexA, leading to derepression of the SOS regulon and eventually DNA repair. The sequence is that of LexA repressor from Geobacillus thermodenitrificans (strain NG80-2).